We begin with the raw amino-acid sequence, 379 residues long: Succinyl-diaminopimelate desuccinylase (379 aa).

Position 70 (H70) interacts with Zn(2+). Residue D72 is part of the active site. Zn(2+) is bound at residue D103. The Proton acceptor role is filled by E137. Zn(2+)-binding residues include E138, E166, and H352.

Belongs to the peptidase M20A family. DapE subfamily. In terms of assembly, homodimer. Zn(2+) serves as cofactor. Requires Co(2+) as cofactor.

The enzyme catalyses N-succinyl-(2S,6S)-2,6-diaminopimelate + H2O = (2S,6S)-2,6-diaminopimelate + succinate. Its pathway is amino-acid biosynthesis; L-lysine biosynthesis via DAP pathway; LL-2,6-diaminopimelate from (S)-tetrahydrodipicolinate (succinylase route): step 3/3. Functionally, catalyzes the hydrolysis of N-succinyl-L,L-diaminopimelic acid (SDAP), forming succinate and LL-2,6-diaminopimelate (DAP), an intermediate involved in the bacterial biosynthesis of lysine and meso-diaminopimelic acid, an essential component of bacterial cell walls. The chain is Succinyl-diaminopimelate desuccinylase from Shewanella baltica (strain OS195).